The sequence spans 2027 residues: Mediator of RNA polymerase II transcription subunit 12 (2027 aa).

At Tyr13 the chain carries Phosphotyrosine. 4 disordered regions span residues 170–191 (QSTS…TPST), 474–516 (GAPG…MDID), 538–563 (MPCE…PPKE), and 1088–1113 (TVTG…QGGR). Phosphoserine occurs at positions 482, 512, 545, and 547. Over residues 549–563 (EKPDVEKEVKPPPKE) the composition is skewed to basic and acidic residues. Residues Ser1105 and Ser1116 each carry the phosphoserine modification. The segment covering 1241–1258 (AETGSSSGSTASNMPSSS) has biased composition (low complexity). 3 disordered regions span residues 1241–1262 (AETG…KTKP), 1297–1321 (ELEK…KSMS), and 1585–1676 (YLEP…PGSI). Basic and acidic residues-rich tracts occupy residues 1297-1316 (ELEK…DRQK) and 1605-1618 (EPEK…KTDK). The tract at residues 1463–1901 (LAKKLQKELG…VRSTAILPEQ (439 aa)) is interaction with CTNNB1 and GLI3. Residues 1631–1640 (KKSTKGKKRS) are compositionally biased toward basic residues. The residue at position 1645 (Lys1645) is an N6-acetyllysine. Position 1746 is an asymmetric dimethylarginine; alternate (Arg1746). Arg1746 is modified (omega-N-methylarginine; alternate). Arg1757 carries the omega-N-methylarginine modification. Positions 1805 to 1848 (QHTGPAGTMVPPSYSSQPYQSTHPSTNPTLVDPTRHLQQRPSGY) are disordered. A compositionally biased stretch (low complexity) spans 1815–1830 (PPSYSSQPYQSTHPST). Residues Arg1844 and Arg1865 each carry the asymmetric dimethylarginine modification. Low complexity-rich tracts occupy residues 1965-1975 (QHQQQQQQQAA), 1983-1999 (SQPQ…QQQQ), and 2008-2021 (LQQQ…QPST). 2 disordered regions span residues 1965–1999 (QHQQ…QQQQ) and 2008–2027 (LQQQ…FGRY).

It belongs to the Mediator complex subunit 12 family. Component of the Mediator complex, which is composed of MED1, MED4, MED6, MED7, MED8, MED9, MED10, MED11, MED12, MED13, MED13L, MED14, MED15, MED16, MED17, MED18, MED19, MED20, MED21, MED22, MED23, MED24, MED25, MED26, MED27, MED29, MED30, MED31, CCNC, CDK8 and CDC2L6/CDK11. The MED12, MED13, CCNC and CDK8 subunits form a distinct module termed the CDK8 module. Mediator containing the CDK8 module is less active than Mediator lacking this module in supporting transcriptional activation. Individual preparations of the Mediator complex lacking one or more distinct subunits have been variously termed ARC, CRSP, DRIP, PC2, SMCC and TRAP. Also interacts with CTNNB1 and GLI3.

It localises to the nucleus. Functionally, component of the Mediator complex, a coactivator involved in the regulated transcription of nearly all RNA polymerase II-dependent genes. Mediator functions as a bridge to convey information from gene-specific regulatory proteins to the basal RNA polymerase II transcription machinery. Mediator is recruited to promoters by direct interactions with regulatory proteins and serves as a scaffold for the assembly of a functional preinitiation complex with RNA polymerase II and the general transcription factors. This subunit may specifically regulate transcription of targets of the Wnt signaling pathway and SHH signaling pathway. This Pan troglodytes (Chimpanzee) protein is Mediator of RNA polymerase II transcription subunit 12 (MED12).